The primary structure comprises 528 residues: Tyrosine--tRNA ligase, cytoplasmic (528 aa).

Residue Met1 is modified to N-acetylmethionine. Gly2 bears the N-acetylglycine; in Tyrosine--tRNA ligase, cytoplasmic, N-terminally processed mark. An L-tyrosine-binding site is contributed by Tyr39. A trans-resveratrol-binding site is contributed by Tyr39. Positions Thr44 to Tyr52 match the 'HIGH' region motif. 4 residues coordinate L-tyrosine: Tyr166, Gln170, Asp173, and Gln188. Trans-resveratrol-binding residues include Gln170 and Asp173. Lys197 carries the N6-acetyllysine modification. A Phosphoserine modification is found at Ser205. Residue Lys206 is modified to N6-acetyllysine. The 'KMSKS' region signature appears at Lys222–Ser226. The Nuclear localization signal motif lies at Lys242–Lys247. Positions Ala339 to Val363 are disordered. Positions Ile364 to Phe468 constitute a tRNA-binding domain. A Phosphoserine modification is found at Ser386. Lys474, Lys482, and Lys490 each carry N6-acetyllysine.

Belongs to the class-I aminoacyl-tRNA synthetase family. In terms of assembly, homodimer. Interacts (when binding to resveratrol) with PARP1; interaction stimulates the poly-ADP-ribosyltransferase activity of PARP1.

It localises to the cytoplasm. The protein localises to the nucleus. It catalyses the reaction tRNA(Tyr) + L-tyrosine + ATP = L-tyrosyl-tRNA(Tyr) + AMP + diphosphate + H(+). With respect to regulation, resveratrol strongly inhibits the tyrosine--tRNA ligase activity. In terms of biological role, tyrosine--tRNA ligase that catalyzes the attachment of tyrosine to tRNA(Tyr) in a two-step reaction: tyrosine is first activated by ATP to form Tyr-AMP and then transferred to the acceptor end of tRNA(Tyr). Also acts as a positive regulator of poly-ADP-ribosylation in the nucleus, independently of its tyrosine--tRNA ligase activity. Activity is switched upon resveratrol-binding: resveratrol strongly inhibits the tyrosine--tRNA ligase activity and promotes relocalization to the nucleus, where YARS1 specifically stimulates the poly-ADP-ribosyltransferase activity of PARP1. The protein is Tyrosine--tRNA ligase, cytoplasmic of Homo sapiens (Human).